The chain runs to 113 residues: U-scoloptoxin(16)-Sa1a (113 aa).

Positions 1-29 (MAPPSNPLFVVLCWALFAYLMLVLRDIQA) are cleaved as a signal peptide.

The protein belongs to the scoloptoxin-16 family. Post-translationally, contains 4 disulfide bonds. Expressed by the venom gland.

The protein resides in the secreted. This chain is U-scoloptoxin(16)-Sa1a, found in Scolopendra alternans (Florida Keys giant centipede).